The following is a 154-amino-acid chain: 8-oxo-dGTP diphosphatase (154 aa).

The Nudix hydrolase domain occupies 1–129; that stretch reads MPQLATICYI…DHTFVEWLLE (129 aa). Residues G38, E53, E56, and E57 each contribute to the Mg(2+) site. The short motif at 38-59 is the Nudix box element; it reads GKLERGETPQECAAREILEETG.

The protein belongs to the Nudix hydrolase family. In terms of assembly, homotrimer. The cofactor is Mg(2+).

The enzyme catalyses 8-oxo-dGTP + H2O = 8-oxo-dGMP + diphosphate + H(+). Functionally, involved in the DNA repair system to avoid A.T to G.C transversions. Degrades 8-oxo-dGTP to the monophosphate, but is also active on all of the nucleoside triphosphates. The polypeptide is 8-oxo-dGTP diphosphatase (mutX) (Streptococcus pneumoniae serotype 4 (strain ATCC BAA-334 / TIGR4)).